Reading from the N-terminus, the 305-residue chain is Aspartate carbamoyltransferase catalytic subunit (305 aa).

Residues Arg-56 and Thr-57 each contribute to the carbamoyl phosphate site. Position 85 (Lys-85) interacts with L-aspartate. Carbamoyl phosphate-binding residues include Arg-106, His-134, and Gln-137. 2 residues coordinate L-aspartate: Arg-167 and Arg-227. The carbamoyl phosphate site is built by Leu-266 and Pro-267.

Belongs to the aspartate/ornithine carbamoyltransferase superfamily. ATCase family. Heterooligomer of catalytic and regulatory chains.

The enzyme catalyses carbamoyl phosphate + L-aspartate = N-carbamoyl-L-aspartate + phosphate + H(+). It functions in the pathway pyrimidine metabolism; UMP biosynthesis via de novo pathway; (S)-dihydroorotate from bicarbonate: step 2/3. In terms of biological role, catalyzes the condensation of carbamoyl phosphate and aspartate to form carbamoyl aspartate and inorganic phosphate, the committed step in the de novo pyrimidine nucleotide biosynthesis pathway. The sequence is that of Aspartate carbamoyltransferase catalytic subunit from Thermoplasma volcanium (strain ATCC 51530 / DSM 4299 / JCM 9571 / NBRC 15438 / GSS1).